The following is a 141-amino-acid chain: Transcription antitermination protein NusB (141 aa).

This sequence belongs to the NusB family.

In terms of biological role, involved in transcription antitermination. Required for transcription of ribosomal RNA (rRNA) genes. Binds specifically to the boxA antiterminator sequence of the ribosomal RNA (rrn) operons. In Desulfotalea psychrophila (strain LSv54 / DSM 12343), this protein is Transcription antitermination protein NusB.